The chain runs to 262 residues: MKTLIKRLQDQQDIWKRIEIVGDIVIIGVPFNKKPEDLVEIANEILSTFPYVKSVWGRHRDVNGTYRLSTYVHLAGEKRSETVYKEHKCKYFLDFTKVFFSEKLSYEHLRVATQVKRDEIIINMFSGFGPFSILSAVLGRPKIVYSIDLNPYAYYYMMVNVELNKAYEVLPIYGDAFKRIYELEDADRIIAPLPELADKAYEVALQKVKKGGIIHLYTEVETNKGEDPVRIAMNKYRGSYFGRIVRSVNPHKYHVVVDIKAN.

Residues His-108, Phe-125, 148–149 (DL), and 175–176 (DA) contribute to the S-adenosyl-L-methionine site.

It belongs to the class I-like SAM-binding methyltransferase superfamily. TRM5/TYW2 family.

The protein resides in the cytoplasm. The catalysed reaction is 4-demethylwyosine(37) in tRNA(Phe) + S-adenosyl-L-methionine = isowyosine(37) in tRNA(Phe) + S-adenosyl-L-homocysteine + H(+). In terms of biological role, catalyzes the C7-methylation of 4-demethylwyosine (imG-14) at position 37 in tRNA(Phe). This Saccharolobus solfataricus (strain ATCC 35092 / DSM 1617 / JCM 11322 / P2) (Sulfolobus solfataricus) protein is tRNA 4-demethylwyosine(37)-methyltransferase Taw21.